The following is a 623-amino-acid chain: Replication protein A 70 kDa DNA-binding subunit (623 aa).

Met1 is modified (N-acetylmethionine). Residues Lys22 and Lys88 each participate in a glycyl lysine isopeptide (Lys-Gly) (interchain with G-Cter in ubiquitin) cross-link. Residues 116–163 (VPYNEGYGQQQQQQQQQQQQAVPSPASAATPPASKPQPQNGSLGMGST) form a disordered region. Low complexity predominate over residues 124-154 (QQQQQQQQQQQQAVPSPASAATPPASKPQPQ). N6-acetyllysine; alternate occurs at positions 172 and 176. Glycyl lysine isopeptide (Lys-Gly) (interchain with G-Cter in ubiquitin); alternate cross-links involve residues Lys172 and Lys176. Phosphothreonine is present on Thr189. Lys192 participates in a covalent cross-link: Glycyl lysine isopeptide (Lys-Gly) (interchain with G-Cter in ubiquitin). Residue Thr200 is modified to Phosphothreonine. Residues 206–290 (WTICARVTNK…VKNDYEMTFN (85 aa)) constitute a DNA-binding region (OB). Glycyl lysine isopeptide (Lys-Gly) (interchain with G-Cter in ubiquitin) cross-links involve residues Lys229 and Lys253. Lys268 carries the post-translational modification N6-acetyllysine; alternate. Residue Lys268 forms a Glycyl lysine isopeptide (Lys-Gly) (interchain with G-Cter in ubiquitin); alternate linkage. Glycyl lysine isopeptide (Lys-Gly) (interchain with G-Cter in ubiquitin) cross-links involve residues Lys276 and Lys340. Ser393 is modified (phosphoserine). Lys419 is covalently cross-linked (Glycyl lysine isopeptide (Lys-Gly) (interchain with G-Cter in ubiquitin)). A Glycyl lysine isopeptide (Lys-Gly) (interchain with G-Cter in SUMO) cross-link involves residue Lys458. A Glycyl lysine isopeptide (Lys-Gly) (interchain with G-Cter in ubiquitin) cross-link involves residue Lys467. Residues 490–512 (CPTQDCNKKVIDQQNGLYRCEKC) form a C4-type zinc finger. Lys562 participates in a covalent cross-link: Glycyl lysine isopeptide (Lys-Gly) (interchain with G-Cter in ubiquitin). Lys586 is covalently cross-linked (Glycyl lysine isopeptide (Lys-Gly) (interchain with G-Cter in SUMO)).

This sequence belongs to the replication factor A protein 1 family. Component of the canonical replication protein A complex (RPA), a heterotrimer composed of RPA1, RPA2 and RPA3. The DNA-binding activity may reside exclusively on the RPA1 subunit. Interacts with PRPF19; the PRP19-CDC5L complex is recruited to the sites of DNA repair where it ubiquitinates the replication protein A complex (RPA). Interacts with RIPK1. Interacts with the polymerase alpha subunit POLA1/p180; this interaction stabilizes the replicative complex and reduces the misincorporation rate of DNA polymerase alpha by acting as a fidelity clamp. Interacts with RAD51 and SENP6 to regulate DNA repair. Interacts with HELB; this interaction promotes HELB recruitment to chromatin following DNA damage. Interacts with PRIMPOL; leading to recruit PRIMPOL on chromatin and stimulate its DNA primase activity. Interacts with XPA; the interaction is direct and associates XPA with the RPA complex. Interacts with ETAA1; the interaction is direct and promotes ETAA1 recruitment at stalled replication forks. Interacts with RPA1; this interaction associates HROB with the RPA complex. Interacts (when poly-ADP-ribosylated) with HTATSF1. DNA damage-induced 'Lys-63'-linked polyubiquitination by PRPF19 mediates ATRIP recruitment to the RPA complex at sites of DNA damage and activation of ATR. Ubiquitinated by RFWD3 at stalled replication forks in response to DNA damage: ubiquitination by RFWD3 does not lead to degradation by the proteasome and promotes removal of the RPA complex from stalled replication forks, promoting homologous recombination. Post-translationally, sumoylated on lysine residues Lys-458 and Lys-586, with Lys-458 being the major site. Sumoylation promotes recruitment of RAD51 to the DNA damage foci to initiate DNA repair through homologous recombination. Desumoylated by SENP6. In terms of processing, poly-ADP-ribosylated by PARP1; promoting recruitment of HTATSF1.

The protein localises to the nucleus. The protein resides in the PML body. As part of the heterotrimeric replication protein A complex (RPA/RP-A), binds and stabilizes single-stranded DNA intermediates, that form during DNA replication or upon DNA stress. It prevents their reannealing and in parallel, recruits and activates different proteins and complexes involved in DNA metabolism. Thereby, it plays an essential role both in DNA replication and the cellular response to DNA damage. In the cellular response to DNA damage, the RPA complex controls DNA repair and DNA damage checkpoint activation. Through recruitment of ATRIP activates the ATR kinase a master regulator of the DNA damage response. It is required for the recruitment of the DNA double-strand break repair factors RAD51 and RAD52 to chromatin in response to DNA damage. Also recruits to sites of DNA damage proteins like XPA and XPG that are involved in nucleotide excision repair and is required for this mechanism of DNA repair. Also plays a role in base excision repair (BER) probably through interaction with UNG. Also recruits SMARCAL1/HARP, which is involved in replication fork restart, to sites of DNA damage. May also play a role in telomere maintenance. The chain is Replication protein A 70 kDa DNA-binding subunit (Rpa1) from Mus musculus (Mouse).